The following is a 596-amino-acid chain: UvrABC system protein C (596 aa).

A GIY-YIG domain is found at 16-95 (SSPGVYRFYS…IKENKPKYNV (80 aa)). One can recognise a UVR domain in the interval 209–244 (SSVKKYYQEKMLSAAEDMQFEKAQFFKERYNSVLGL).

This sequence belongs to the UvrC family. In terms of assembly, interacts with UvrB in an incision complex.

The protein resides in the cytoplasm. The UvrABC repair system catalyzes the recognition and processing of DNA lesions. UvrC both incises the 5' and 3' sides of the lesion. The N-terminal half is responsible for the 3' incision and the C-terminal half is responsible for the 5' incision. The polypeptide is UvrABC system protein C (Cytophaga hutchinsonii (strain ATCC 33406 / DSM 1761 / CIP 103989 / NBRC 15051 / NCIMB 9469 / D465)).